The chain runs to 93 residues: MDGIKYAVFTEKSLRLLGKNQYTFNVESGFTKTEIKHWVELFFGVKVVAVNSHRLPGKGRRMGPILGHTMHYRRMIITLQPGYSIPLLDREKN.

Belongs to the universal ribosomal protein uL23 family. Part of the 50S ribosomal subunit.

The protein resides in the plastid. Its subcellular location is the chloroplast. Functionally, binds to 23S rRNA. The chain is Large ribosomal subunit protein uL23cz/uL23cy (rpl23-A) from Oryza nivara (Indian wild rice).